The primary structure comprises 513 residues: ATP synthase subunit alpha (513 aa).

ATP is bound at residue 169 to 176 (GDRQCGKT).

Belongs to the ATPase alpha/beta chains family. In terms of assembly, F-type ATPases have 2 components, CF(1) - the catalytic core - and CF(0) - the membrane proton channel. CF(1) has five subunits: alpha(3), beta(3), gamma(1), delta(1), epsilon(1). CF(0) has three main subunits: a(1), b(2) and c(9-12). The alpha and beta chains form an alternating ring which encloses part of the gamma chain. CF(1) is attached to CF(0) by a central stalk formed by the gamma and epsilon chains, while a peripheral stalk is formed by the delta and b chains.

Its subcellular location is the cell inner membrane. It catalyses the reaction ATP + H2O + 4 H(+)(in) = ADP + phosphate + 5 H(+)(out). In terms of biological role, produces ATP from ADP in the presence of a proton gradient across the membrane. The alpha chain is a regulatory subunit. The polypeptide is ATP synthase subunit alpha (Alteromonas mediterranea (strain DSM 17117 / CIP 110805 / LMG 28347 / Deep ecotype)).